A 1522-amino-acid chain; its full sequence is Dicer-like protein 1 (1522 aa).

Acidic residues predominate over residues methionine 1–aspartate 12. The disordered stretch occupies residues methionine 1–glutamate 37. In terms of domain architecture, Helicase ATP-binding spans leucine 76 to leucine 258. An ATP-binding site is contributed by leucine 89–threonine 96. The DEAH box signature appears at aspartate 202–histidine 205. The Helicase C-terminal domain maps to tryptophan 408–isoleucine 576. Positions serine 600–alanine 700 constitute a Dicer dsRNA-binding fold domain. The region spanning proline 859 to asparagine 980 is the PAZ domain. 2 RNase III domains span residues isoleucine 995–histidine 1166 and alanine 1222–glutamate 1373. Residues glutamate 1262, aspartate 1359, and glutamate 1362 each coordinate Mg(2+). Positions threonine 1409–glycine 1478 constitute a DRBM domain. Zn(2+) contacts are provided by cysteine 1421, histidine 1449, cysteine 1490, and cysteine 1492.

Belongs to the helicase family. Dicer subfamily. It depends on Mg(2+) as a cofactor. Requires Mn(2+) as cofactor.

In terms of biological role, dicer-like endonuclease involved in cleaving double-stranded RNA in the RNA interference (RNAi) pathway. Produces 21 to 25 bp dsRNAs (siRNAs) which target the selective destruction of homologous RNAs leading to sequence-specific suppression of gene expression, called post-transcriptional gene silencing (PTGS). Part of a broad host defense response against viral infection and transposons. The protein is Dicer-like protein 1 (DCL1) of Phaeosphaeria nodorum (strain SN15 / ATCC MYA-4574 / FGSC 10173) (Glume blotch fungus).